A 113-amino-acid polypeptide reads, in one-letter code: U10-theraphotoxin-Hs2a (113 aa).

The signal sequence occupies residues 1–21 (MNTVRVTFLLVFVLAVSLGQA). Residues 22-67 (DEDGNRMEKRQKKTEAENLLLPKLEELDAKLWEEDSVESRNSRQKR) constitute a propeptide that is removed on maturation. 3 disulfides stabilise this stretch: Cys68–Cys86, Cys75–Cys91, and Cys85–Cys106.

This sequence belongs to the neurotoxin 14 (magi-1) family. 02 (HWTX-XVIc) subfamily. Expressed by the venom gland.

It is found in the secreted. In terms of biological role, probable ion channel inhibitor. The sequence is that of U10-theraphotoxin-Hs2a from Cyriopagopus schmidti (Chinese bird spider).